The primary structure comprises 798 residues: Suppressor of spindle checkpoint defect 1 (798 aa).

Positions 339–359 (ESIQQSQVNVDDMCNRIANME) form a coiled coil.

Belongs to the APC5 family. In terms of assembly, the APC/C complex is probably composed of at least 12 subunits: apc-2, apc-10, apc-11, cdc-26, emb-1, emb-27, emb-30, mat-1, mat-2, mat-3, such-1 and gfi-3. In terms of tissue distribution, expressed in head neurons, vulval precursor cells and in mature sperm stored in the spermatheca.

Its pathway is protein modification; protein ubiquitination. Probable component of the anaphase promoting complex/cyclosome (APC/C), a cell cycle-regulated E3 ubiquitin ligase that controls progression through mitosis and the G1 phase of the cell cycle. The APC/C complex acts by mediating ubiquitination and subsequent degradation of target proteins. Required for the metaphase to anaphase transition in meiosis. Plays a role in the segregation of DNA and centrioles during meiosis in male germ cells. The sequence is that of Suppressor of spindle checkpoint defect 1 from Caenorhabditis elegans.